Consider the following 294-residue polypeptide: Gene 15 protein (294 aa).

This is Gene 15 protein (15) from Mycobacterium phage L5 (Mycobacteriophage L5).